We begin with the raw amino-acid sequence, 711 residues long: Ribosomal RNA large subunit methyltransferase K/L (711 aa).

One can recognise a THUMP domain in the interval 43 to 154; the sequence is LAYRITLWSR…RGQITLGINF (112 aa).

The protein belongs to the methyltransferase superfamily. RlmKL family.

The protein resides in the cytoplasm. It catalyses the reaction guanosine(2445) in 23S rRNA + S-adenosyl-L-methionine = N(2)-methylguanosine(2445) in 23S rRNA + S-adenosyl-L-homocysteine + H(+). It carries out the reaction guanosine(2069) in 23S rRNA + S-adenosyl-L-methionine = N(2)-methylguanosine(2069) in 23S rRNA + S-adenosyl-L-homocysteine + H(+). Specifically methylates the guanine in position 2445 (m2G2445) and the guanine in position 2069 (m7G2069) of 23S rRNA. This is Ribosomal RNA large subunit methyltransferase K/L from Shewanella loihica (strain ATCC BAA-1088 / PV-4).